A 366-amino-acid chain; its full sequence is Chalcone synthase B (366 aa).

Cys172 is an active-site residue.

This sequence belongs to the thiolase-like superfamily. Chalcone/stilbene synthases family.

The enzyme catalyses (E)-4-coumaroyl-CoA + 3 malonyl-CoA + 3 H(+) = 2',4,4',6'-tetrahydroxychalcone + 3 CO2 + 4 CoA. It participates in secondary metabolite biosynthesis; flavonoid biosynthesis. In terms of biological role, the primary product of this enzyme is 4,2',4',6'-tetrahydroxychalcone (also termed naringenin-chalcone or chalcone) which can under specific conditions spontaneously isomerize into naringenin. The protein is Chalcone synthase B (CHSB) of Ipomoea triloba (Trilobed morning glory).